A 339-amino-acid chain; its full sequence is Dipeptide transport system permease protein DppB (339 aa).

The Periplasmic segment spans residues 1–9 (MLQFILRRL). Residues 10-30 (GLVIPTFIGITLLTFAFVHMI) traverse the membrane as a helical segment. At 31–102 (PGDPVMIMAG…VPRFQATLEL (72 aa)) the chain is on the cytoplasmic side. The ABC transmembrane type-1 domain maps to 96–328 (FQATLELGVC…LVNLLVDLLY (233 aa)). A helical membrane pass occupies residues 103–123 (GVCAMIFATAVGIPVGVLAAV). Topologically, residues 124–135 (KRGSIFDHTAVG) are periplasmic. Residues 136–156 (LALTGYSMPIFWWGMMLIMLV) traverse the membrane as a helical segment. The Cytoplasmic segment spans residues 157-171 (SVHWNLTPVSGRVSD). The helical transmembrane segment at 172–192 (MVFLDDSNPLTGFMLIDTAIW) threads the bilayer. The Periplasmic portion of the chain corresponds to 193 to 200 (GEDGNFID). A helical membrane pass occupies residues 201-221 (AVAHMILPAIVLGTIPLAVIV). The Cytoplasmic segment spans residues 222 to 259 (RMTRSSMLEVLGEDYIRTARAKGLTRMRVIIVHALRNA). A helical membrane pass occupies residues 260-280 (MLPVVTVIGLQVGTLLAGAIL). Residues 281-309 (TETIFSWPGLGRWLIDALQRRDYPVVQGG) lie on the Periplasmic side of the membrane. The helical transmembrane segment at 310–330 (VLLVATMIILVNLLVDLLYGV) threads the bilayer. Residues 331–339 (VNPRIRHKK) are Cytoplasmic-facing.

It belongs to the binding-protein-dependent transport system permease family. OppBC subfamily. The complex is composed of two ATP-binding proteins (DppD and DppF), two transmembrane proteins (DppB and DppC) and a solute-binding protein (DppA).

The protein resides in the cell inner membrane. Its function is as follows. Part of the ABC transporter DppABCDF involved in dipeptide transport. Responsible for the translocation of the substrate across the membrane. This is Dipeptide transport system permease protein DppB (dppB) from Escherichia coli O157:H7.